Here is a 227-residue protein sequence, read N- to C-terminus: Heptaprenylglyceryl phosphate synthase (227 aa).

Lys13 contacts sn-glycerol 1-phosphate. Mg(2+)-binding residues include Asp15 and Thr41. Sn-glycerol 1-phosphate contacts are provided by residues 159 to 164 (YLEYSG), Gly189, and 209 to 210 (GN).

This sequence belongs to the GGGP/HepGP synthase family. Group I subfamily. Homodimer. Mg(2+) is required as a cofactor.

It catalyses the reaction sn-glycerol 1-phosphate + all-trans-heptaprenyl diphosphate = 3-heptaprenyl-sn-glycero-1-phosphate + diphosphate. It participates in membrane lipid metabolism; glycerophospholipid metabolism. Prenyltransferase that catalyzes in vivo the transfer of the heptaprenyl moiety of heptaprenyl pyrophosphate (HepPP; 35 carbon atoms) to the C3 hydroxyl of sn-glycerol-1-phosphate (G1P), producing heptaprenylglyceryl phosphate (HepGP). This reaction is an ether-bond-formation step in the biosynthesis of archaea-type G1P-based membrane lipids found in Bacillales. This is Heptaprenylglyceryl phosphate synthase from Exiguobacterium sibiricum (strain DSM 17290 / CCUG 55495 / CIP 109462 / JCM 13490 / 255-15).